The primary structure comprises 173 residues: Translation initiation factor IF-3 (173 aa).

Belongs to the IF-3 family. As to quaternary structure, monomer.

The protein resides in the cytoplasm. IF-3 binds to the 30S ribosomal subunit and shifts the equilibrium between 70S ribosomes and their 50S and 30S subunits in favor of the free subunits, thus enhancing the availability of 30S subunits on which protein synthesis initiation begins. The protein is Translation initiation factor IF-3 of Parvibaculum lavamentivorans (strain DS-1 / DSM 13023 / NCIMB 13966).